We begin with the raw amino-acid sequence, 226 residues long: Protein-L-isoaspartate O-methyltransferase (226 aa).

Ser66 is an active-site residue.

Belongs to the methyltransferase superfamily. L-isoaspartyl/D-aspartyl protein methyltransferase family.

Its subcellular location is the cytoplasm. The enzyme catalyses [protein]-L-isoaspartate + S-adenosyl-L-methionine = [protein]-L-isoaspartate alpha-methyl ester + S-adenosyl-L-homocysteine. Functionally, catalyzes the methyl esterification of L-isoaspartyl residues in peptides and proteins that result from spontaneous decomposition of normal L-aspartyl and L-asparaginyl residues. It plays a role in the repair and/or degradation of damaged proteins. This Methanopyrus kandleri (strain AV19 / DSM 6324 / JCM 9639 / NBRC 100938) protein is Protein-L-isoaspartate O-methyltransferase.